Consider the following 415-residue polypeptide: Multidrug resistance protein MdtA (415 aa).

The signal sequence occupies residues 1-21 (MKGSYKSRWVIVIVVVIAAIA). A compositionally biased stretch (polar residues) spans 31–47 (DSQSAAPGATKQAQQSP). 2 disordered regions span residues 31 to 60 (DSQSAAPGATKQAQQSPAGGRRGMRSGPLA) and 392 to 415 (EAQSATTPEEKATSREYAKKGARS). Residues 399 to 415 (PEEKATSREYAKKGARS) show a composition bias toward basic and acidic residues.

This sequence belongs to the membrane fusion protein (MFP) (TC 8.A.1) family. Part of a tripartite efflux system composed of MdtA, MdtB and MdtC.

Its subcellular location is the cell inner membrane. In terms of biological role, the MdtABC tripartite complex confers resistance against novobiocin and deoxycholate. This chain is Multidrug resistance protein MdtA, found in Escherichia coli O8 (strain IAI1).